Reading from the N-terminus, the 539-residue chain is Keratin, type II cytoskeletal 73 (539 aa).

The segment at Met-1–Gln-130 is head. The segment at Glu-131–Leu-166 is coil 1A. The 314-residue stretch at Glu-131–Met-444 folds into the IF rod domain. A linker 1 region spans residues Gln-167–His-185. Residues Ile-186–Met-277 form a coil 1B region. The segment at Gln-278–Ile-301 is linker 12. The interval Ile-302–Glu-440 is coil 2. Residues Glu-441–Arg-539 are tail.

It belongs to the intermediate filament family. Heterotetramer of two type I and two type II keratins.

Has a role in hair formation. Specific component of keratin intermediate filaments in the inner root sheath (IRS) of the hair follicle. This Mus musculus (Mouse) protein is Keratin, type II cytoskeletal 73 (Krt73).